We begin with the raw amino-acid sequence, 297 residues long: N-acetylneuraminate lyase (297 aa).

Serine 47 and threonine 48 together coordinate aceneuramate. Residue tyrosine 137 is the Proton donor of the active site. Lysine 165 functions as the Schiff-base intermediate with substrate in the catalytic mechanism. Aceneuramate is bound by residues threonine 167, glycine 189, aspartate 191, glutamate 192, and serine 208.

Belongs to the DapA family. NanA subfamily. Homotetramer.

It is found in the cytoplasm. The catalysed reaction is aceneuramate = aldehydo-N-acetyl-D-mannosamine + pyruvate. Its pathway is amino-sugar metabolism; N-acetylneuraminate degradation; D-fructose 6-phosphate from N-acetylneuraminate: step 1/5. In terms of biological role, catalyzes the reversible aldol cleavage of N-acetylneuraminic acid (sialic acid; Neu5Ac) to form pyruvate and N-acetylmannosamine (ManNAc) via a Schiff base intermediate. The chain is N-acetylneuraminate lyase from Escherichia fergusonii (strain ATCC 35469 / DSM 13698 / CCUG 18766 / IAM 14443 / JCM 21226 / LMG 7866 / NBRC 102419 / NCTC 12128 / CDC 0568-73).